We begin with the raw amino-acid sequence, 235 residues long: MHTNTEPTQSSDLALLGLMQLISPALPIGAFAWSQGLESAFELGWVTNEQQLGEWLEGVLDDGLTRCELPVLARLQNCWAKSDSEGLSYWNDWLHANRETAELSDEDTRLGLALMRLLNSLQLQPQIEQGHAALPQDPGYVTVFAWLAQQRQIPVRQSLLGFVWGWLENQLAVACKAMPLGHTAAQRLIEQLRPKMVIAIDTALALADDQLGPIMPGLALGSAQHETQYSRLFRS.

It belongs to the UreF family. UreD, UreF and UreG form a complex that acts as a GTP-hydrolysis-dependent molecular chaperone, activating the urease apoprotein by helping to assemble the nickel containing metallocenter of UreC. The UreE protein probably delivers the nickel.

It is found in the cytoplasm. Required for maturation of urease via the functional incorporation of the urease nickel metallocenter. The polypeptide is Urease accessory protein UreF (Pseudoalteromonas translucida (strain TAC 125)).